Consider the following 221-residue polypeptide: Ras-related protein Rab-27A (221 aa).

S2 bears the N-acetylserine mark. At S2 the chain carries Phosphoserine. Position 16 to 24 (16 to 24 (GDSGVGKTS)) interacts with GTP. An Effector region motif is present at residues 38–46 (FITTVGIDF). GTP contacts are provided by residues 74 to 78 (DTAGQ), 133 to 136 (NKSD), and 163 to 165 (SAA). A disulfide bridge connects residues C123 and C188. Residues C219 and C221 are each lipidated (S-geranylgeranyl cysteine). A Cysteine methyl ester modification is found at C221.

It belongs to the small GTPase superfamily. Rab family. In terms of assembly, binds SYTL1, SLAC2B, MYRIP, SYTL3, SYTL4 and SYTL5. Interacts with RPH3A and RPH3A. Binds MLPH and SYTL2. Interacts with UNC13D. Does not interact with the BLOC-3 complex (heterodimer of HPS1 and HPS4). Interacts (GDP-bound form preferentially) with DENND10.

The protein resides in the membrane. The protein localises to the melanosome. Its subcellular location is the late endosome. It is found in the lysosome. The catalysed reaction is GTP + H2O = GDP + phosphate + H(+). Regulated by guanine nucleotide exchange factors (GEFs) which promote the exchange of bound GDP for free GTP, GTPase activating proteins (GAPs) which increase the GTP hydrolysis activity, and GDP dissociation inhibitors which inhibit the dissociation of the nucleotide from the GTPase. Activated by GEFs such as DENND10. Small GTPase which cycles between active GTP-bound and inactive GDP-bound states. In its active state, binds to a variety of effector proteins to regulate homeostasis of late endocytic pathway, including endosomal positioning, maturation and secretion. Plays a role in cytotoxic granule exocytosis in lymphocytes. Required for both granule maturation and granule docking and priming at the immunologic synapse. The chain is Ras-related protein Rab-27A (RAB27A) from Canis lupus familiaris (Dog).